Reading from the N-terminus, the 231-residue chain is Cytidylate kinase (231 aa).

An ATP-binding site is contributed by 12-20 (GPSGAGKGT).

The protein belongs to the cytidylate kinase family. Type 1 subfamily.

It is found in the cytoplasm. It catalyses the reaction CMP + ATP = CDP + ADP. The enzyme catalyses dCMP + ATP = dCDP + ADP. This is Cytidylate kinase from Shewanella amazonensis (strain ATCC BAA-1098 / SB2B).